The chain runs to 377 residues: Ribosomal RNA large subunit methyltransferase G (377 aa).

The protein belongs to the methyltransferase superfamily. RlmG family.

The protein localises to the cytoplasm. It catalyses the reaction guanosine(1835) in 23S rRNA + S-adenosyl-L-methionine = N(2)-methylguanosine(1835) in 23S rRNA + S-adenosyl-L-homocysteine + H(+). In terms of biological role, specifically methylates the guanine in position 1835 (m2G1835) of 23S rRNA. This is Ribosomal RNA large subunit methyltransferase G from Streptomyces coelicolor (strain ATCC BAA-471 / A3(2) / M145).